The chain runs to 201 residues: Ribonuclease HII (201 aa).

Residues Asn-14–Glu-201 enclose the RNase H type-2 domain. 3 residues coordinate a divalent metal cation: Asp-20, Glu-21, and Asp-112.

This sequence belongs to the RNase HII family. Requires Mn(2+) as cofactor. Mg(2+) is required as a cofactor.

Its subcellular location is the cytoplasm. It carries out the reaction Endonucleolytic cleavage to 5'-phosphomonoester.. Its function is as follows. Endonuclease that specifically degrades the RNA of RNA-DNA hybrids. This is Ribonuclease HII from Photobacterium profundum (strain SS9).